An 880-amino-acid polypeptide reads, in one-letter code: Tyrosine-protein kinase receptor TYRO3 (880 aa).

The N-terminal stretch at 1-30 (MALRRSMGRPGLRPLLLAGLASLLLPGSAA) is a signal peptide. 2 Ig-like C2-type domains span residues 31–118 (AGLK…TKIS) and 129–210 (PFFT…AIIR). Topologically, residues 31–419 (AGLKLMGAPV…QGPPHSRTSW (389 aa)) are extracellular. 8 N-linked (GlcNAc...) asparagine glycosylation sites follow: Asn53, Asn75, Asn181, Asn220, Asn230, Asn283, Asn356, and Asn370. 2 disulfides stabilise this stretch: Cys54-Cys107 and Cys150-Cys193. 2 Fibronectin type-III domains span residues 217-310 (APFN…TKGL) and 315-406 (APQN…SHDH). Residues 420-440 (VPVVLGVLTALITAAALALIL) form a helical membrane-spanning segment. The Cytoplasmic segment spans residues 441–880 (LRKRRKETRF…QQGLLPHSSC (440 aa)). Ser456 is modified (phosphoserine). The 278-residue stretch at 508–785 (FTLGRMLGKG…LENILGHLSV (278 aa)) folds into the Protein kinase domain. Residues 514–522 (LGKGEFGSV) and Lys540 each bind ATP. The active-site Proton acceptor is Asp645. Phosphotyrosine; by autocatalysis occurs at positions 671, 675, 676, and 794. Disordered regions lie at residues 804 to 827 (AENG…GSGM) and 842 to 864 (SPGG…LNEN). Ser808 and Ser859 each carry phosphoserine. Residues 852–864 (QLEQQPESPLNEN) are compositionally biased toward polar residues.

This sequence belongs to the protein kinase superfamily. Tyr protein kinase family. AXL/UFO subfamily. As to quaternary structure, monomer and homodimer. Interacts (via N-terminus) with extracellular ligands TULP1 and GAS6. Interacts with PIK3R1; this interaction increases PI3-kinase activity. Post-translationally, autophosphorylated. As to expression, abundant in the brain and lower levels in other tissues.

The protein resides in the cell membrane. The catalysed reaction is L-tyrosyl-[protein] + ATP = O-phospho-L-tyrosyl-[protein] + ADP + H(+). In terms of biological role, receptor tyrosine kinase that transduces signals from the extracellular matrix into the cytoplasm by binding to several ligands including TULP1 or GAS6. Regulates many physiological processes including cell survival, migration and differentiation. Ligand binding at the cell surface induces dimerization and autophosphorylation of TYRO3 on its intracellular domain that provides docking sites for downstream signaling molecules. Following activation by ligand, interacts with PIK3R1 and thereby enhances PI3-kinase activity. Activates the AKT survival pathway, including nuclear translocation of NF-kappa-B and up-regulation of transcription of NF-kappa-B-regulated genes. TYRO3 signaling plays a role in various processes such as neuron protection from excitotoxic injury, platelet aggregation and cytoskeleton reorganization. Also plays an important role in inhibition of Toll-like receptors (TLRs)-mediated innate immune response by activating STAT1, which selectively induces production of suppressors of cytokine signaling SOCS1 and SOCS3. This Rattus norvegicus (Rat) protein is Tyrosine-protein kinase receptor TYRO3 (Tyro3).